Here is a 164-residue protein sequence, read N- to C-terminus: Photosystem II extrinsic protein V (164 aa).

The N-terminal stretch at 1 to 27 (MALKSKFLVGSILATFILNGFSSPAQA) is a signal peptide. 4 residues coordinate heme c: C64, C67, H68, and H119.

It belongs to the cytochrome c family. PsbV subfamily. As to quaternary structure, PSII is composed of 1 copy each of membrane proteins PsbA, PsbB, PsbC, PsbD, PsbE, PsbF, PsbH, PsbI, PsbJ, PsbK, PsbL, PsbM, PsbT, PsbY, PsbZ, Psb30/Ycf12, at least 3 peripheral proteins of the oxygen-evolving complex and a large number of cofactors. It forms dimeric complexes. Requires heme c as cofactor.

It localises to the plastid. It is found in the chloroplast thylakoid membrane. One of the extrinsic, lumenal subunits of photosystem II (PSII). PSII is a light-driven water plastoquinone oxidoreductase, using light energy to abstract electrons from H(2)O, generating a proton gradient subsequently used for ATP formation. The extrinsic proteins stabilize the structure of photosystem II oxygen-evolving complex (OEC), the ion environment of oxygen evolution and protect the OEC against heat-induced inactivation. This chain is Photosystem II extrinsic protein V, found in Emiliania huxleyi (Coccolithophore).